The chain runs to 511 residues: Bifunctional purine biosynthesis protein PurH (511 aa).

Positions 1-146 constitute an MGS-like domain; that stretch reads MGRLALISVT…KNFAHLTVIS (146 aa).

This sequence belongs to the PurH family.

The enzyme catalyses (6R)-10-formyltetrahydrofolate + 5-amino-1-(5-phospho-beta-D-ribosyl)imidazole-4-carboxamide = 5-formamido-1-(5-phospho-D-ribosyl)imidazole-4-carboxamide + (6S)-5,6,7,8-tetrahydrofolate. The catalysed reaction is IMP + H2O = 5-formamido-1-(5-phospho-D-ribosyl)imidazole-4-carboxamide. It functions in the pathway purine metabolism; IMP biosynthesis via de novo pathway; 5-formamido-1-(5-phospho-D-ribosyl)imidazole-4-carboxamide from 5-amino-1-(5-phospho-D-ribosyl)imidazole-4-carboxamide (10-formyl THF route): step 1/1. Its pathway is purine metabolism; IMP biosynthesis via de novo pathway; IMP from 5-formamido-1-(5-phospho-D-ribosyl)imidazole-4-carboxamide: step 1/1. In Microcystis aeruginosa (strain NIES-843 / IAM M-2473), this protein is Bifunctional purine biosynthesis protein PurH.